A 198-amino-acid chain; its full sequence is ATP-dependent Clp protease proteolytic subunit (198 aa).

Ser98 acts as the Nucleophile in catalysis. His123 is a catalytic residue.

This sequence belongs to the peptidase S14 family. In terms of assembly, fourteen ClpP subunits assemble into 2 heptameric rings which stack back to back to give a disk-like structure with a central cavity, resembling the structure of eukaryotic proteasomes.

It localises to the cytoplasm. The catalysed reaction is Hydrolysis of proteins to small peptides in the presence of ATP and magnesium. alpha-casein is the usual test substrate. In the absence of ATP, only oligopeptides shorter than five residues are hydrolyzed (such as succinyl-Leu-Tyr-|-NHMec, and Leu-Tyr-Leu-|-Tyr-Trp, in which cleavage of the -Tyr-|-Leu- and -Tyr-|-Trp bonds also occurs).. Its function is as follows. Cleaves peptides in various proteins in a process that requires ATP hydrolysis. Has a chymotrypsin-like activity. Plays a major role in the degradation of misfolded proteins. The chain is ATP-dependent Clp protease proteolytic subunit from Listeria monocytogenes serovar 1/2a (strain ATCC BAA-679 / EGD-e).